Consider the following 142-residue polypeptide: Transcriptional regulator MraZ (142 aa).

SpoVT-AbrB domains follow at residues 5 to 51 (ASSL…PRNE) and 77 to 120 (AMDV…DAAT).

This sequence belongs to the MraZ family. In terms of assembly, forms oligomers.

The protein localises to the cytoplasm. Its subcellular location is the nucleoid. In Polaromonas sp. (strain JS666 / ATCC BAA-500), this protein is Transcriptional regulator MraZ.